Here is a 369-residue protein sequence, read N- to C-terminus: MKLYSVSIIIFVLIALSTIVNAQQAATDSCNSTLPLNDLTFNTSLLQCTEAWTPQNFILRYARTAENTWSFILSAPDSSAFIGIGFSTNGQMIGSSAIVGWIPSDGGSGTVKPYLLGGKSPGEVNPDQGDLTIVNGSLKIESVSSRLYMRFQLTATLPRQSLLYAVGPAGFFPSSPDFRLREHRFVTTTTINYNTGSQSVVKVSPHSKLKKTHGLMNMFGWGILIIVGAIVARHMKQWDPTWFYAHIALQTTGFLLGLTGVICGLVLENRLKANNVSKHKGLGITILVMGVLQMLALLARPDKQSKYRKYWNWYHHNIGRLLIILAISNIFYGIHLAKAGTSWNGGYGFAVAVLALTAIGLEVRKFLKK.

The N-terminal stretch at 1–22 is a signal peptide; the sequence is MKLYSVSIIIFVLIALSTIVNA. Residues 55–167 form the DOMON domain; that stretch reads QNFILRYART…PRQSLLYAVG (113 aa). Residues 174 to 369 enclose the Cytochrome b561 domain; it reads SSPDFRLREH…GLEVRKFLKK (196 aa). Residues 212–232 form a helical membrane-spanning segment; sequence THGLMNMFGWGILIIVGAIVA. Heme b-binding residues include His213 and His246. 2 helical membrane passes run 247 to 267 and 279 to 299; these read IALQTTGFLLGLTGVICGLVL and HKGLGITILVMGVLQMLALLA. Residues His279 and His315 each contribute to the heme b site. 2 helical membrane-spanning segments follow: residues 321 to 341 and 343 to 363; these read LLIILAISNIFYGIHLAKAGT and WNGGYGFAVAVLALTAIGLEV.

Requires heme b as cofactor.

Its subcellular location is the membrane. Functionally, may act as a catecholamine-responsive trans-membrane electron transporter. This is Cytochrome b561 and DOMON domain-containing protein At3g07570 from Arabidopsis thaliana (Mouse-ear cress).